The chain runs to 357 residues: Phosphoribosylformylglycinamidine cyclo-ligase (357 aa).

The protein belongs to the AIR synthase family.

It is found in the cytoplasm. The enzyme catalyses 2-formamido-N(1)-(5-O-phospho-beta-D-ribosyl)acetamidine + ATP = 5-amino-1-(5-phospho-beta-D-ribosyl)imidazole + ADP + phosphate + H(+). It functions in the pathway purine metabolism; IMP biosynthesis via de novo pathway; 5-amino-1-(5-phospho-D-ribosyl)imidazole from N(2)-formyl-N(1)-(5-phospho-D-ribosyl)glycinamide: step 2/2. This is Phosphoribosylformylglycinamidine cyclo-ligase from Rhizobium etli (strain ATCC 51251 / DSM 11541 / JCM 21823 / NBRC 15573 / CFN 42).